The following is a 287-amino-acid chain: uncharacterized protein (287 aa).

This is an uncharacterized protein from Mycoplasma genitalium (strain ATCC 33530 / DSM 19775 / NCTC 10195 / G37) (Mycoplasmoides genitalium).